Consider the following 720-residue polypeptide: ATP-dependent RNA helicase glh-3 (720 aa).

Over residues 1–11 (MDKSPTKTSIR) the composition is skewed to polar residues. Disordered regions lie at residues 1–34 (MDKS…SCIK) and 125–180 (LNSR…SYGN). Basic and acidic residues-rich tracts occupy residues 141-154 (NVKE…RSDD) and 162-172 (SAKDEERDRDS). 2 consecutive CCHC-type zinc fingers follow at residues 202–219 (NTCF…ECSA) and 222–239 (RECA…ECAS). The short motif at 298 to 326 (KSFSDSDIPQSMRRNVERAGYTRTTPIQQ) is the Q motif element. Residues 329–513 (LPLVADGKDI…RKLLREDYTM (185 aa)) form the Helicase ATP-binding domain. Residue 342-349 (AQTGSGKT) coordinates ATP. A DEAD box motif is present at residues 456-459 (DEAD). Positions 549–698 (DIDTYTTEKN…VVPSWMKEAA (150 aa)) constitute a Helicase C-terminal domain. The disordered stretch occupies residues 696–720 (EAAGGTSNPNKFEKSIDTEEPEEAW).

The protein belongs to the DEAD box helicase family. DDX4/VASA subfamily. As to quaternary structure, interacts with csn-5. Interacts (via C-terminus) with kgb-1. Interacts with zyx-1.

Its subcellular location is the cytoplasm. It carries out the reaction ATP + H2O = ADP + phosphate + H(+). Probable ATP-binding RNA helicase. In Caenorhabditis elegans, this protein is ATP-dependent RNA helicase glh-3.